A 203-amino-acid polypeptide reads, in one-letter code: bMERB domain-containing protein 1 (203 aa).

The region spanning 3 to 149 is the bMERB domain; it reads LKQSLSVHLE…EQEEDKEMAD (147 aa). A disordered region spans residues 161–184; that stretch reads VTKTSASSRAEKKAEPPPSKPTVA.

This Mus musculus (Mouse) protein is bMERB domain-containing protein 1 (Bmerb1).